A 93-amino-acid chain; its full sequence is Small ribosomal subunit protein uS19 (93 aa).

It belongs to the universal ribosomal protein uS19 family.

Protein S19 forms a complex with S13 that binds strongly to the 16S ribosomal RNA. This Geobacter metallireducens (strain ATCC 53774 / DSM 7210 / GS-15) protein is Small ribosomal subunit protein uS19.